Consider the following 128-residue polypeptide: MNFSVIFAVGIGGFFGAISRFLIATWMQKITHSLFPVGTLTVNVLGSFIIGFLYMYFEQSINPIYKAMFITGFLGALTTFSTFSLETLLMIQDGLWIRAFLNILLNVILTISSTFAAIILFKKMYGGL.

4 helical membrane passes run 3–23 (FSVIFAVGIGGFFGAISRFLI), 34–54 (LFPVGTLTVNVLGSFIIGFLY), 69–89 (FITGFLGALTTFSTFSLETLL), and 100–120 (FLNILLNVILTISSTFAAIIL). Na(+)-binding residues include Gly-75 and Thr-78.

It belongs to the fluoride channel Fluc/FEX (TC 1.A.43) family.

It localises to the cell inner membrane. It carries out the reaction fluoride(in) = fluoride(out). Its activity is regulated as follows. Na(+) is not transported, but it plays an essential structural role and its presence is essential for fluoride channel function. Its function is as follows. Fluoride-specific ion channel. Important for reducing fluoride concentration in the cell, thus reducing its toxicity. This Nitratiruptor sp. (strain SB155-2) protein is Fluoride-specific ion channel FluC.